A 371-amino-acid chain; its full sequence is Neuropeptide Y receptor type 6 (371 aa).

At 1–31 the chain is on the extracellular side; it reads MEVLTNQPTPNKTSGKSNNSAFFYFESCQPP. Residues N11 and N18 are each glycosylated (N-linked (GlcNAc...) asparagine). Residues 32–52 traverse the membrane as a helical segment; sequence FLAILLLLIAYTVILIMGIFG. Over 53 to 82 the chain is Cytoplasmic; the sequence is NLSLIIIIFKKQREAQNVTNILIANLSLSD. A helical membrane pass occupies residues 83 to 103; it reads ILVCVMCIPFTVIYTLMDHWV. The Extracellular segment spans residues 104–111; it reads FGNTMCKL. C109 and C196 are joined by a disulfide. A helical transmembrane segment spans residues 112–132; it reads TSYVQSVSVSVSIFSLVLIAI. Topologically, residues 133-150 are cytoplasmic; sequence ERYQLIVNPRGWKPRVAH. A helical membrane pass occupies residues 151 to 171; that stretch reads AYWGIILIWLISLTLSIPLFL. Residues 172–206 are Extracellular-facing; it reads SYHLTNEPFHNLSLPTDIYTHQVACVEIWPSKLNQ. N-linked (GlcNAc...) asparagine glycosylation occurs at N182. A helical membrane pass occupies residues 207 to 227; sequence LLFSTSLFMLQYFVPLGFILI. Residues 228 to 263 lie on the Cytoplasmic side of the membrane; that stretch reads CYLKIVLCLRKRTRQVDRRKENKSRLNENKRVNVML. A helical transmembrane segment spans residues 264-284; the sequence is ISIVVTFGACWLPLNIFNVIF. Over 285–297 the chain is Extracellular; that stretch reads DWYHEMLMSCHHD. Residues 298–318 traverse the membrane as a helical segment; sequence LVFVVCHLIAMVSTCINPLFY. The Cytoplasmic segment spans residues 319 to 371; the sequence is GFLNKNFQKDLMMLIHHCWCGEPQESYENIAMSTMHTDESKGSLKLAHIPTGI. C336 carries the S-palmitoyl cysteine lipid modification.

It belongs to the G-protein coupled receptor 1 family. As to expression, kidney and discrete regions of the hypothalamus including the suprachiasmatic nucleus, anterior hypothalamus, bed nucleus stria terminalis, and the ventromedial nucleus.

Its subcellular location is the cell membrane. Functionally, receptor for neuropeptide Y and peptide YY. The rank order of affinity of this receptor for pancreatic polypeptides is NPY = PYY &gt;= NPY (2-36) = [Leu-31, Pro-34] NPY &gt; NPY (13-36) &gt; PP. The activity of this receptor is mediated by G proteins that inhibits adenylate cyclase activity. The polypeptide is Neuropeptide Y receptor type 6 (Npy6r) (Mus musculus (Mouse)).